Reading from the N-terminus, the 671-residue chain is Phospholipid:diacylglycerol acyltransferase 1 (671 aa).

The interval 1-46 (MPLIHRKKPTEKPSTPPSEEVVHDEDSQKKPHESSKSHHKKSNGGG) is disordered. The Cytoplasmic portion of the chain corresponds to 1–54 (MPLIHRKKPTEKPSTPPSEEVVHDEDSQKKPHESSKSHHKKSNGGGKWSCIDSC). Residues 20–36 (EVVHDEDSQKKPHESSK) show a composition bias toward basic and acidic residues. A helical membrane pass occupies residues 55–75 (CWFIGCVCVTWWFLLFLYNAM). Residues 76–671 (PASFPQYVTE…EWSERIDLKL (596 aa)) are Lumenal-facing. Asn161 is a glycosylation site (N-linked (GlcNAc...) asparagine). Ser254 functions as the Acyl-ester intermediate in the catalytic mechanism. N-linked (GlcNAc...) asparagine glycans are attached at residues Asn381 and Asn434. Catalysis depends on charge relay system residues Asp573 and His626. N-linked (GlcNAc...) asparagine glycosylation is present at Asn647.

The protein belongs to the AB hydrolase superfamily. Lipase family. In terms of tissue distribution, ubiquitous. Highest expression in young developing seeds.

It is found in the membrane. It catalyses the reaction a glycerophospholipid + a 1,2-diacyl-sn-glycerol = a monoacylglycerophospholipid + a triacyl-sn-glycerol. Its pathway is glycerolipid metabolism; triacylglycerol biosynthesis. Functionally, triacylglycerol formation by an acyl-CoA independent pathway. The enzyme preferentially transfers acyl groups from the sn-2 position of a phospholipid to diacylglycerol, thus forming an sn-1-lysophospholipid. Involved in epoxy and hydroxy fatty acid accumulation in seeds. Has complementary functions with DAG1 that are essential for triacylglycerol synthesis and normal development of both seeds and pollen. The sequence is that of Phospholipid:diacylglycerol acyltransferase 1 (PDAT1) from Arabidopsis thaliana (Mouse-ear cress).